The chain runs to 277 residues: Phosphoenolpyruvate synthase regulatory protein (277 aa).

Gly157–Thr164 is a binding site for ADP.

The protein belongs to the pyruvate, phosphate/water dikinase regulatory protein family. PSRP subfamily.

It catalyses the reaction [pyruvate, water dikinase] + ADP = [pyruvate, water dikinase]-phosphate + AMP + H(+). The catalysed reaction is [pyruvate, water dikinase]-phosphate + phosphate + H(+) = [pyruvate, water dikinase] + diphosphate. Its function is as follows. Bifunctional serine/threonine kinase and phosphorylase involved in the regulation of the phosphoenolpyruvate synthase (PEPS) by catalyzing its phosphorylation/dephosphorylation. This chain is Phosphoenolpyruvate synthase regulatory protein, found in Escherichia coli O17:K52:H18 (strain UMN026 / ExPEC).